Reading from the N-terminus, the 249-residue chain is Caffeoyl-CoA O-methyltransferase (249 aa).

A substrate-binding site is contributed by K21. S-adenosyl-L-methionine-binding positions include T63, E85, G87–V88, S93, D111, and A140. D162 serves as a coordination point for substrate. An a divalent metal cation-binding site is contributed by D162. D164 provides a ligand contact to S-adenosyl-L-methionine. Residues D188 and N189 each coordinate a divalent metal cation. A substrate-binding site is contributed by N193.

It belongs to the class I-like SAM-binding methyltransferase superfamily. Cation-dependent O-methyltransferase family. CCoAMT subfamily. Homodimer. The cofactor is a divalent metal cation.

It carries out the reaction (E)-caffeoyl-CoA + S-adenosyl-L-methionine = (E)-feruloyl-CoA + S-adenosyl-L-homocysteine + H(+). It functions in the pathway aromatic compound metabolism; phenylpropanoid biosynthesis. Methylates caffeoyl-CoA to feruloyl-CoA and 5-hydroxyferuloyl-CoA to sinapoyl-CoA. Plays a role in the synthesis of feruloylated polysaccharides. Involved in the reinforcement of the plant cell wall. Also involved in the responding to wounding or pathogen challenge by the increased formation of cell wall-bound ferulic acid polymers. The sequence is that of Caffeoyl-CoA O-methyltransferase from Eucalyptus gunnii (Cider gum).